The chain runs to 343 residues: MLLLKKQTEDISSVYEIREKLGSGAFSEVMLAQERGSAHLVALKCIPKKALRGKEALVENEIAVLRRISHPNIVALEDVHESPSHLYLAMELVTGGELFDRIMERGSYTEKDASHLVGQVLGAVSYLHSLGIVHRDLKPENLLYATPFEDSKIMVSDFGLSKIQAGNMLGTACGTPGYVAPELLEQKPYGKAVDVWALGVISYILLCGYPPFYDESDPELFSQILRASYEFDSPFWDDISESAKDFIRHLLERDPQKRFTCQQALQHLWISGDAAFDRDILGSVSEQIQKNFARTHWKRAFNATSFLRHIRKLGQSPEGEEASRQCMTRHSHPGLGTSQSPKW.

The Protein kinase domain occupies 15 to 270; it reads YEIREKLGSG…CQQALQHLWI (256 aa). ATP-binding positions include 21 to 29 and Lys-44; that span reads LGSGAFSEV. Residue Asp-136 is the Proton acceptor of the active site. The interval 290–311 is calmodulin-binding; sequence KNFARTHWKRAFNATSFLRHIR. The interval 314–343 is disordered; that stretch reads GQSPEGEEASRQCMTRHSHPGLGTSQSPKW. Phosphoserine is present on Ser-338.

The protein belongs to the protein kinase superfamily. CAMK Ser/Thr protein kinase family. CaMK subfamily. As to expression, expressed at highest levels in adult brain, and expressed in embryo. In the adult brain detected at high levels in the anterior olfactory nuclei, piriform cortex, septal nuclei, bed nuclei of the stria terminalis, hippocampal pyramidal cells, dentate granule cells, amygdala, hypothalamic nuclei, parabrachial nucleus, and nucleus of the solitary tract. Expressed at lower levels in adult ovary and heart and at very low levels in testis, lung and muscle.

The protein localises to the cytoplasm. It localises to the nucleus. The enzyme catalyses L-seryl-[protein] + ATP = O-phospho-L-seryl-[protein] + ADP + H(+). The catalysed reaction is L-threonyl-[protein] + ATP = O-phospho-L-threonyl-[protein] + ADP + H(+). Activated by Ca(2+)/calmodulin. Its function is as follows. Calcium/calmodulin-dependent protein kinase belonging to a proposed calcium-triggered signaling cascade. In vitro phosphorylates CREB1 and SYN1/synapsin I. Phosphorylates and activates CAMK1. The polypeptide is Calcium/calmodulin-dependent protein kinase type 1B (Pnck) (Mus musculus (Mouse)).